The following is a 49-amino-acid chain: DNA-directed RNA polymerase subunit Rpo12 (49 aa).

Zn(2+) contacts are provided by Cys-11, Cys-27, and Cys-30.

The protein belongs to the archaeal Rpo12/eukaryotic RPC10 RNA polymerase subunit family. As to quaternary structure, part of the RNA polymerase complex. Zn(2+) is required as a cofactor.

The protein resides in the cytoplasm. Its subcellular location is the chromosome. The catalysed reaction is RNA(n) + a ribonucleoside 5'-triphosphate = RNA(n+1) + diphosphate. Functionally, DNA-dependent RNA polymerase (RNAP) catalyzes the transcription of DNA into RNA using the four ribonucleoside triphosphates as substrates. The protein is DNA-directed RNA polymerase subunit Rpo12 of Thermococcus kodakarensis (strain ATCC BAA-918 / JCM 12380 / KOD1) (Pyrococcus kodakaraensis (strain KOD1)).